Consider the following 2367-residue polypeptide: Toxin B (2367 aa).

Positions 2-91 (SLVNRKQLEK…EILELKNSNL (90 aa)) are four-helical bundle. In terms of domain architecture, GT44 spans 96-469 (KNLHFIWIGG…YPEANTTITL (374 aa)). Residues 96 to 469 (KNLHFIWIGG…YPEANTTITL (374 aa)) form a glucosyltransferase region region. Residues 101-103 (IWI), Asn-139, 269-273 (SDILR), and 286-288 (DVD) contribute to the UDP-alpha-D-glucose site. Mg(2+) is bound by residues Asp-286, Asp-288, and Glu-516. 519 to 521 (SLW) contributes to the UDP-alpha-D-glucose binding site. The tract at residues 545–800 (GEDDNLDFSQ…KSKNLPELST (256 aa)) is autoprocessing region. Residues Glu-546 and Asp-547 each coordinate Zn(2+). The 208-residue stretch at 568–775 (SSSTKSSERG…EESIIKDISS (208 aa)) folds into the Peptidase C80 domain. 3 residues coordinate 1D-myo-inositol hexakisphosphate: Tyr-578, Lys-601, and Lys-648. His-654 is a Zn(2+) binding site. The For protease activity role is filled by His-654. The Nucleophile; for protease activity role is filled by Cys-699. Residue His-758 coordinates Zn(2+). 1D-myo-inositol hexakisphosphate contacts are provided by Lys-765, Lys-776, and Lys-793. Residues 801 to 1501 (LLQEIRNNSN…VVLIIKVYMD (701 aa)) are translocation region. Interaction with host frizzled receptors FZD1, FZD2 and FZD7 regions lie at residues 1434–1439 (LKTLMA), 1487–1512 (SELSDVVLIIKVYMDNSKPPFGYYSN), and 1598–1600 (SLK). 19 Cell wall-binding repeats span residues 1833–1852 (VSGLVYINDSLYYFKPPIKN), 1854–1873 (ITGFTTIGDDKYYFNPDNGG), 1876–1895 (SVGETIIDGKNYYFSQNGVL), 1926–1945 (FTGKLIIDENVYYFGDNYRA), 1946–1965 (AIEWQTLDDEVYYFSTDTGR), 1967–1986 (FKGLNQIGDDKFYFNSDGIM), 1987–2006 (QKGFVNINDKTFYFDDSGVM), 2007–2026 (KSGYTEIDGRYFYFAENGEM), 2057–2076 (YSGILNFNNKIYYFDDSFTA), 2077–2097 (VVGWKDLEDGSKYYFDENTAE), 2099–2118 (SIGISIINDGKYYFNDSGIM), 2119–2138 (QIGFVTINNEVFYFSDSGIV), 2139–2158 (ESGMQNIDDNYFYISENGLV), 2209–2231 (ETGWIYDSENESDKYYFDPEAKK), 2233–2252 (YKGINVIDDIKYYFDENGIM), 2253–2272 (RTGLITFEDNHYYFNEDGEM), 2273–2292 (QYGYLNIEDKMFYFSEDGIM), 2323–2342 (YTGWLDLDEKRYYFTDEYIA), and 2343–2362 (ATGSVIIDGEEYYFDPDTAQ). The segment at 1835–2367 (GLVYINDSLY…PDTAQLVISE (533 aa)) is receptor-binding (CROPS) region.

It belongs to the clostridial glucosylating toxin (LCGT) family. Interacts with host FZD1. Interacts with host FZD2; interaction promotes toxin entry into host cell and occupies the binding site for Wnt-adducted palmitoleate in FZD2, leading to prevent Wnt-binding and downstream Wnt signaling. Interacts with host FZD7. Interacts with host CSPG4. Interacts with host NECTIN3/PVRL3. It depends on Zn(2+) as a cofactor. Mn(2+) serves as cofactor. Mg(2+) is required as a cofactor. In terms of processing, undergoes autocatalytic cleavage to release the N-terminal part (Glucosyltransferase TcdB), which constitutes the active part of the toxin, in the host cytosol. 1D-myo-inositol hexakisphosphate-binding (InsP6) activates the peptidase C80 domain and promotes autoprocessing.

The protein localises to the secreted. It localises to the host endosome membrane. Its subcellular location is the host cytoplasm. It is found in the host cytosol. The protein resides in the host cell membrane. It catalyses the reaction L-threonyl-[protein] + UDP-alpha-D-glucose = 3-O-(alpha-D-glucosyl)-L-threonyl-[protein] + UDP + H(+). With respect to regulation, protease activity is activated upon binding to 1D-myo-inositol hexakisphosphate (InsP6), which induces conformational reorganization. Functionally, precursor of a cytotoxin that targets and disrupts the colonic epithelium, inducing the host inflammatory and innate immune responses and resulting in diarrhea and pseudomembranous colitis. TcdB constitutes the main toxin that mediates the pathology of C.difficile infection, an opportunistic pathogen that colonizes the colon when the normal gut microbiome is disrupted. Compared to TcdA, TcdB is more virulent and more important for inducing the host inflammatory and innate immune responses. This form constitutes the precursor of the toxin: it enters into host cells and mediates autoprocessing to release the active toxin (Glucosyltransferase TcdB) into the host cytosol. Targets colonic epithelia by binding to the frizzled receptors FZD1, FZD2 and FZD7, and enters host cells via clathrin-mediated endocytosis. Frizzled receptors constitute the major host receptors in the colonic epithelium, but other receptors, such as CSPG4 or NECTIN3/PVRL3, have been identified. Binding to carbohydrates and sulfated glycosaminoglycans on host cell surface also contribute to entry into cells. Once entered into host cells, acidification in the endosome promotes the membrane insertion of the translocation region and formation of a pore, leading to translocation of the GT44 and peptidase C80 domains across the endosomal membrane. This activates the peptidase C80 domain and autocatalytic processing, releasing the N-terminal part (Glucosyltransferase TcdB), which constitutes the active part of the toxin, in the cytosol. Active form of the toxin, which is released into the host cytosol following autoprocessing and inactivates small GTPases. Acts by mediating monoglucosylation of small GTPases of the Rho family (Rac1, RhoA, RhoB, RhoC, RhoG and Cdc42) in host cells at the conserved threonine residue located in the switch I region ('Thr-37/35'), using UDP-alpha-D-glucose as the sugar donor. Monoglucosylation of host small GTPases completely prevents the recognition of the downstream effector, blocking the GTPases in their inactive form, leading to actin cytoskeleton disruption and cell death, resulting in the loss of colonic epithelial barrier function. This is Toxin B from Clostridioides difficile (Peptoclostridium difficile).